A 1295-amino-acid polypeptide reads, in one-letter code: MDLTTTSHARVDSGGVPFTSSLNDPTPPKLSASIALPAHLHLLAKAYGIPESHILQLAWALAANEQNARTAQWEHLELDERQAISWVLRHWQDPSVHRYLSPDELRGDKHQIPATVMAVVEEYSLFQTLALTGSETEIGMCFHPSTEQPWLRVIWNPEGMLASSASRLTRALESALHAVFLTPHVKVGDLTLFSIWDHQQILQWNSHYPQATDRLVHELFKDVVDASPQANAVAAWDGELTYRELDRLSSRLSGRLQDEFGVQPETIVVLCFEKSVWAIVAMLAVVKAGGAFLHVDPQHPAVRHQAMVQTTAAKLVLCSARTRSIISASVPECTSLVIDRRAFSVEPDHVQHETLLSSQNLSPRNAAYVVCTSGSTGTPKAIVVEHASLSTSVDAQANAMEISSGSRVLQYAAYTFDVSVGDIFTALTHGACICIPSDWERSHDLAGAINRLNVNQACLTSTVASILSPAEVPGLEKLTLGGEPATRQCVDAWAEQVRLKNVYGPAECTVWCMIQPEVSRHISVSNIGHGIGARAWIVHPEDHDRLMPVGAVGELLIEGPLVARGYLNDSTRTDEVFLSQPPRWLESFGPTPSRSRFYKTGDLARYGPAGALLFEGRKDTQIKLRGQRIELSEIEYRLHRALSDQVATAVELAHPKGSTAPVLAAFITWDQGIDLQNVQNVTLDARQEFEELASRIKAEIEQALPSYMVPALFIPVQTLPLTTSGKLDRKSLRHFCSQCSHEFLKKLDDSSPADAAPKESANPAEENLARLWAQVLERKSESIRRGDNFLSLGGDSLAAMRLVNLAARDLRLTLTVADVFNSPILADQANLLRPLVQTKHIAPFELVTDGDLPIQDLMDSVAKQCGLTSDQVEDVYPCTPYQEEMVRDSLSGTRTQMGQEVIQLASDLDLSRYLSACARVFQRCPILRTRFVEISGKLLQVVIREDISWQRPTSLAAYIEADNQTPPTLGKPLARWALTEDSTHLVLTMHHAIFDGISLGQIFGAIYAVYQSIPLPQVNLTFATFIGKIYRPHHDLPDASKQFWRSYLSPTAGSNDAPLSDVERASRPCANSGTQRLVTFQAGAVKALQQHGLTEATLARAAWACTLARGRQSPDSDVIFGTILTGRNIHLPGVDALAAPALAHTPIRVRMAAAQQEKPAHFLARVQADATAMIPFEHDGMDRIRALDEQVRVACDNMRTLLVIQPIPEGLILDSKSPFPGTMLSGPRVEAREMRHFHWYGLLMECTLLPMDGFFVRMSFDDTLYSPEAAERLLDEYSQTLHELAHGLTVDGSTE.

The interval 1 to 24 (MDLTTTSHARVDSGGVPFTSSLND) is disordered. Residues 221–624 (KDVVDASPQA…EGRKDTQIKL (404 aa)) form an adenylation region. The Carrier domain maps to 759 to 836 (ESANPAEENL…DQANLLRPLV (78 aa)). Serine 796 carries the O-(pantetheine 4'-phosphoryl)serine modification. The interval 873–1284 (EDVYPCTPYQ…DEYSQTLHEL (412 aa)) is condensation.

This sequence belongs to the NRP synthetase family. Pantetheine 4'-phosphate is required as a cofactor.

The enzyme catalyses restrictinol + glycine + H(+) = restricticin + H2O. The protein operates within antifungal biosynthesis. Nonribosomal peptide synthetase; part of the gene cluster that mediates the biosynthesis of the tetrahydropyranyl antifungal agent restricticin that acts as an inhibitor of CYP51 and blocks the ergosterol biosynthesis. Within the pathway, resC catalyzes the C3 esterification of restrictinol with glycine to yield restricticin. ResC represents an example of the emerging class of single-module NRPS-like enzymes that perform esterification reactions. The highly reducing polyketide synthase resH, the short chain dehydrogenase resG, the cyclase resF, the FAD-dependent monooxygenase resA and the enoylreductase resD are required to generate the first stable intermediate desmethylrestrictinol. ResH with resD biosynthesize the first polyketide chain intermediate that is reduced by resG, followed by epoxidation by resA before 6-endo cyclization via epoxide opening by resF leads to desmethylrestrictinol. The methyltransferase resE then catalyzes the C4 O-methylation of desmethylrestrictinol to produce restrictinol, and the nonribosomal peptide synthetase resC catalyzes the C3 esterification of restrictinol with glycine that leads to restricticin. This chain is Nonribosomal peptide synthetase resC, found in Aspergillus sclerotiorum.